Consider the following 228-residue polypeptide: L-ribulose-5-phosphate 4-epimerase UlaF (228 aa).

Substrate-binding positions include 26–27 (GN), 43–44 (SG), and 72–73 (SS). The Zn(2+) site is built by aspartate 74, histidine 93, and histidine 95. Aspartate 118 functions as the Proton donor/acceptor in the catalytic mechanism. Residue histidine 167 coordinates Zn(2+). The active-site Proton donor/acceptor is tyrosine 225.

It belongs to the aldolase class II family. AraD/FucA subfamily. The cofactor is Zn(2+).

The catalysed reaction is L-ribulose 5-phosphate = D-xylulose 5-phosphate. It functions in the pathway cofactor degradation; L-ascorbate degradation; D-xylulose 5-phosphate from L-ascorbate: step 4/4. Functionally, catalyzes the isomerization of L-ribulose 5-phosphate to D-xylulose 5-phosphate. Is involved in the anaerobic L-ascorbate utilization. The chain is L-ribulose-5-phosphate 4-epimerase UlaF from Escherichia coli O139:H28 (strain E24377A / ETEC).